Consider the following 735-residue polypeptide: Ethylene receptor 1 (735 aa).

3 helical membrane-spanning segments follow: residues 23-43 (ISDF…IYFV), 54-74 (VLVQ…INLW), and 92-112 (VLTA…IPDL). 2 residues coordinate Cu cation: C65 and H69. The GAF domain maps to 158-307 (DRHTILKTTL…VVADQVAVAL (150 aa)). One can recognise a Histidine kinase domain in the interval 350 to 586 (VMNHEMRTPM…IFDVKLAISN (237 aa)). Phosphohistidine; by autocatalysis is present on H353. One can recognise a Response regulatory domain in the interval 609–726 (KVLVMDENGV…NMRNVLSDRL (118 aa)). Residue D657 is modified to 4-aspartylphosphate. K711 participates in a covalent cross-link: Glycyl lysine isopeptide (Lys-Gly) (interchain with G-Cter in ubiquitin).

Belongs to the ethylene receptor family. In terms of assembly, homodimer; disulfide-linked. The cofactor is Cu cation. In terms of processing, activation probably requires a transfer of a phosphate group between a His in the transmitter domain and an Asp of the receiver domain.

The protein localises to the endoplasmic reticulum membrane. The catalysed reaction is ATP + protein L-histidine = ADP + protein N-phospho-L-histidine.. May act early in the ethylene signal transduction pathway, possibly as an ethylene receptor, or as a regulator of the pathway. This Brassica oleracea (Wild cabbage) protein is Ethylene receptor 1 (ETR1).